The chain runs to 792 residues: LPS-assembly protein LptD (792 aa).

The signal sequence occupies residues 1-22 (MYRVLRLLPLPLSVAISLSALA).

Belongs to the LptD family. In terms of assembly, component of the lipopolysaccharide transport and assembly complex. Interacts with LptE and LptA.

The protein localises to the cell outer membrane. Functionally, together with LptE, is involved in the assembly of lipopolysaccharide (LPS) at the surface of the outer membrane. The sequence is that of LPS-assembly protein LptD from Xylella fastidiosa (strain Temecula1 / ATCC 700964).